The sequence spans 791 residues: Endonuclease MutS2 (791 aa).

337 to 344 (GPNTGGKT) contributes to the ATP binding site. The disordered stretch occupies residues 689-715 (AAQASQKKPEKSVRSSRGLRSSRASSE). Over residues 703-713 (SSRGLRSSRAS) the composition is skewed to low complexity. The 76-residue stretch at 716–791 (LDLRGQRYEE…GTGATIVNLQ (76 aa)) folds into the Smr domain.

The protein belongs to the DNA mismatch repair MutS family. MutS2 subfamily. As to quaternary structure, homodimer. Binds to stalled ribosomes, contacting rRNA.

Its function is as follows. Endonuclease that is involved in the suppression of homologous recombination and thus may have a key role in the control of bacterial genetic diversity. Functionally, acts as a ribosome collision sensor, splitting the ribosome into its 2 subunits. Detects stalled/collided 70S ribosomes which it binds and splits by an ATP-hydrolysis driven conformational change. Acts upstream of the ribosome quality control system (RQC), a ribosome-associated complex that mediates the extraction of incompletely synthesized nascent chains from stalled ribosomes and their subsequent degradation. Probably generates substrates for RQC. This chain is Endonuclease MutS2, found in Lactobacillus gasseri (strain ATCC 33323 / DSM 20243 / BCRC 14619 / CIP 102991 / JCM 1131 / KCTC 3163 / NCIMB 11718 / NCTC 13722 / AM63).